We begin with the raw amino-acid sequence, 198 residues long: MGSEAMLPVALLIGYLLGSIPFGLILTKLAGTQDLRSIGSGNIGATNVLRTGRKGLAAATLLGDALKGTAAVIIAGYLGGSNAAMLAGLGAFLGHLFPVWLKFRGGKGVAVYIGILIGLLWPYAIFFCLVWLATAFASRYSSLAALVASVLTPIVLWAFGHTALAALFALLTLLLIYMHRENIKRLRAGTESKIGAKK.

The next 5 helical transmembrane spans lie at 6 to 26, 56 to 78, 83 to 101, 113 to 133, and 154 to 174; these read MLPV…GLIL, LAAA…AGYL, AAML…PVWL, IGIL…VWLA, and IVLW…LTLL.

The protein belongs to the PlsY family. As to quaternary structure, probably interacts with PlsX.

The protein localises to the cell inner membrane. The catalysed reaction is an acyl phosphate + sn-glycerol 3-phosphate = a 1-acyl-sn-glycero-3-phosphate + phosphate. It participates in lipid metabolism; phospholipid metabolism. Functionally, catalyzes the transfer of an acyl group from acyl-phosphate (acyl-PO(4)) to glycerol-3-phosphate (G3P) to form lysophosphatidic acid (LPA). This enzyme utilizes acyl-phosphate as fatty acyl donor, but not acyl-CoA or acyl-ACP. This is Glycerol-3-phosphate acyltransferase from Bradyrhizobium sp. (strain ORS 278).